We begin with the raw amino-acid sequence, 162 residues long: RNA pyrophosphohydrolase (162 aa).

One can recognise a Nudix hydrolase domain in the interval 7–149 (EYRPCVGIML…KKEVYKKVIE (143 aa)). Residues 40 to 61 (GGVDEGEELEQAALRELLEEVG) carry the Nudix box motif.

The protein belongs to the Nudix hydrolase family. RppH subfamily. It depends on a divalent metal cation as a cofactor.

In terms of biological role, accelerates the degradation of transcripts by removing pyrophosphate from the 5'-end of triphosphorylated RNA, leading to a more labile monophosphorylated state that can stimulate subsequent ribonuclease cleavage. This is RNA pyrophosphohydrolase from Wolbachia pipientis subsp. Culex pipiens (strain wPip).